Reading from the N-terminus, the 142-residue chain is Large ribosomal subunit protein uL13 (142 aa).

Belongs to the universal ribosomal protein uL13 family. In terms of assembly, part of the 50S ribosomal subunit.

In terms of biological role, this protein is one of the early assembly proteins of the 50S ribosomal subunit, although it is not seen to bind rRNA by itself. It is important during the early stages of 50S assembly. The chain is Large ribosomal subunit protein uL13 from Xanthomonas campestris pv. campestris (strain ATCC 33913 / DSM 3586 / NCPPB 528 / LMG 568 / P 25).